A 66-amino-acid polypeptide reads, in one-letter code: MRLTYLLLLLVAVLFQAGSGSAEPIFFYGRQPCSYYDGVCRDKSDVNCKYIAFTYCENPNQRCCYY.

An N-terminal signal peptide occupies residues 1–22; that stretch reads MRLTYLLLLLVAVLFQAGSGSA. The propeptide occupies 23–24; the sequence is EP. 3 disulfide bridges follow: C33–C63, C40–C56, and C48–C64.

In terms of tissue distribution, produced by the crural gland and detected in venom from the spur located on each male hind leg. Is the only OvDLP that is expressed in venom gland alone.

It localises to the secreted. Does not show antimicrobial, myotoxic, hemolytic and cell-promoting activities. This Ornithorhynchus anatinus (Duckbill platypus) protein is Ornithorhynchus venom defensin-like peptide A.